We begin with the raw amino-acid sequence, 237 residues long: Sugar fermentation stimulation protein homolog (237 aa).

Belongs to the SfsA family.

The sequence is that of Sugar fermentation stimulation protein homolog from Methylobacterium radiotolerans (strain ATCC 27329 / DSM 1819 / JCM 2831 / NBRC 15690 / NCIMB 10815 / 0-1).